Here is a 310-residue protein sequence, read N- to C-terminus: Mitochondrial thiamine pyrophosphate carrier 1 (310 aa).

Helical transmembrane passes span 16–32, 88–104, 117–141, 173–197, 218–234, and 274–291; these read VSPY…GGVA, ILYV…YSAL, IVMP…LTTY, GISG…LMFW, ICGF…TFPL, and GYGV…ISLW. 3 Solcar repeats span residues 16-107, 120-205, and 211-299; these read VSPY…LSKS, PSSV…AREF, and HVPF…VISA.

This sequence belongs to the mitochondrial carrier (TC 2.A.29) family.

The protein resides in the mitochondrion inner membrane. Functionally, mitochondrial transporter that mediates uptake of thiamine pyrophosphate (ThPP) into mitochondria. The polypeptide is Mitochondrial thiamine pyrophosphate carrier 1 (TPC1) (Lodderomyces elongisporus (strain ATCC 11503 / CBS 2605 / JCM 1781 / NBRC 1676 / NRRL YB-4239) (Yeast)).